We begin with the raw amino-acid sequence, 1137 residues long: Ribonucleoside-diphosphate reductase large subunit (1137 aa).

Residues 1–32 form a disordered region; that stretch reads MASRPAASSPVEARAPVGGQEAGGPSAATQGE. The RIP homotypic interaction motif (RHIM) motif lies at 64–84; sequence SYRISDNNFVQCGSNCTMIID. Disordered stretches follow at residues 124-159 and 173-315; these read GGTP…FTLG and AVFG…YPVP. The segment covering 131-141 has biased composition (polar residues); that stretch reads AGTSTGTQTAD. Over residues 196-206 the composition is skewed to acidic residues; sequence SDSDDSEDTDS. Residues 281–290 are compositionally biased toward low complexity; it reads AGAGLAADPA. Residues 291–304 show a composition bias toward basic and acidic residues; that stretch reads VARDDAEGLSDPRP. Substrate-binding positions include Thr-566, 581–582, Gly-612, 791–795, and 968–972; these read SC, NLCTE, and PTAAS. A disulfide bridge links Cys-582 with Cys-808. Asn-791 acts as the Proton acceptor in catalysis. The active-site Cysteine radical intermediate is Cys-793. Glu-795 (proton acceptor) is an active-site residue.

It belongs to the ribonucleoside diphosphate reductase large chain family. As to quaternary structure, heterotetramer composed of a homodimer of the large subunit (R1) and a homodimer of the small subunit (R2). Larger multisubunit protein complex are also active, composed of (R1)n(R2)n. Self-assembles (via RIP homotypic interaction motif/RHIM) into homomeric fibrillar amyloid structures. Interacts (via RHIM) with human RIPK1 (via RHIM). Interacts (via RHIM) with human RIPK3 (via RHIM); the interaction leads to heteromeric amyloid assemblies. Interacts (via RHIM) with human ZBP1 (via RHIM); the interaction leads to heteromeric amyloid assemblies. Interacts (via C-terminus) with host CASP8.

The enzyme catalyses a 2'-deoxyribonucleoside 5'-diphosphate + [thioredoxin]-disulfide + H2O = a ribonucleoside 5'-diphosphate + [thioredoxin]-dithiol. Functionally, ribonucleoside-diphosphate reductase holoenzyme that provides the precursors necessary for viral DNA synthesis. Allows virus growth in non-dividing cells, as well as reactivation from latency in infected hosts. Catalyzes the biosynthesis of deoxyribonucleotides from the corresponding ribonucleotides. Prevents host necroptosis by targeting host RIPK1 and RIPK3, thereby hampering the formation of necroptotic RIPK1-RIPK3 complexes. Forms hetero-amyloid structures with host proteins RIPK3 or ZBP1 which may prevent RIPK3- and ZBP1-mediated necroptosis. In addition, inhibits extrinsic apoptosis by targeting host CASP8. The protein is Ribonucleoside-diphosphate reductase large subunit of Human herpesvirus 1 (strain 17) (HHV-1).